The chain runs to 194 residues: Thymidine kinase (194 aa).

Residues 15–22 (GPMFSGKS) and 89–92 (DEAH) contribute to the ATP site. The active-site Proton acceptor is the Glu90. Positions 146, 149, 178, and 181 each coordinate Zn(2+).

This sequence belongs to the thymidine kinase family. In terms of assembly, homotetramer.

Its subcellular location is the cytoplasm. The catalysed reaction is thymidine + ATP = dTMP + ADP + H(+). The chain is Thymidine kinase from Metamycoplasma arthritidis (strain 158L3-1) (Mycoplasma arthritidis).